The sequence spans 429 residues: UDP-N-acetylglucosamine 1-carboxyvinyltransferase (429 aa).

22–23 (KN) lines the phosphoenolpyruvate pocket. Position 102 (Arg102) interacts with UDP-N-acetyl-alpha-D-glucosamine. Cys126 serves as the catalytic Proton donor. Position 126 is a 2-(S-cysteinyl)pyruvic acid O-phosphothioketal (Cys126). Asp316 and Ile338 together coordinate UDP-N-acetyl-alpha-D-glucosamine.

Belongs to the EPSP synthase family. MurA subfamily.

The protein localises to the cytoplasm. The catalysed reaction is phosphoenolpyruvate + UDP-N-acetyl-alpha-D-glucosamine = UDP-N-acetyl-3-O-(1-carboxyvinyl)-alpha-D-glucosamine + phosphate. The protein operates within cell wall biogenesis; peptidoglycan biosynthesis. Cell wall formation. Adds enolpyruvyl to UDP-N-acetylglucosamine. In Methylorubrum extorquens (strain PA1) (Methylobacterium extorquens), this protein is UDP-N-acetylglucosamine 1-carboxyvinyltransferase.